The sequence spans 508 residues: Lysine--tRNA ligase (508 aa).

Positions 418 and 425 each coordinate Mg(2+).

This sequence belongs to the class-II aminoacyl-tRNA synthetase family. In terms of assembly, homodimer. Mg(2+) is required as a cofactor.

The protein resides in the cytoplasm. The enzyme catalyses tRNA(Lys) + L-lysine + ATP = L-lysyl-tRNA(Lys) + AMP + diphosphate. This is Lysine--tRNA ligase from Burkholderia pseudomallei (strain 668).